Consider the following 189-residue polypeptide: Ribosome hibernation promotion factor (189 aa).

The protein belongs to the HPF/YfiA ribosome-associated protein family. Long HPF subfamily. In terms of assembly, interacts with 100S ribosomes. Not associated with 70S ribosome monomers, about 1 monomer per ribosome.

The protein localises to the cytoplasm. In terms of biological role, required for dimerization of active 70S ribosomes into 100S ribosomes in stationary phase; 100S ribosomes are translationally inactive and sometimes present during exponential growth. May not be the only factor implicated. Might negatively regulate the activity of the sigma-54 factor (SigL). The polypeptide is Ribosome hibernation promotion factor (yvyD) (Bacillus subtilis (strain 168)).